Reading from the N-terminus, the 960-residue chain is Dynamin-like GTPase OPA1, mitochondrial (960 aa).

The transit peptide at 1–87 (MWRAGRAAVA…IKYGYQPRRN (87 aa)) directs the protein to the mitochondrion. At 88-96 (FWPARLAAR) the chain is on the mitochondrial matrix side. The chain crosses the membrane as a helical span at residues 97 to 113 (LLKLRYIILGSAVGGGY). The Mitochondrial intermembrane portion of the chain corresponds to 114 to 770 (TAKKTFDEWK…NAIENMIGPD (657 aa)). A coiled-coil region spans residues 210–254 (SDKEKIDQLQEELLHTQLKYQRILERLEKENKELRKLVLQKDDKG). Positions 217 to 222 (QLQEEL) match the LQQQIQ motif motif. K228 bears the N6-acetyllysine mark. The region spanning 285 to 561 (QDHLPRVVVV…FWKMVRESVE (277 aa)) is the Dynamin-type G domain. The segment at 295-302 (GDQSAGKT) is G1 motif. GTP is bound by residues S298, G300, K301, T302, S303, and G317. Mg(2+) is bound at residue T302. Residues 321-324 (MMTR) are G2 motif. Mg(2+)-binding residues include T323 and D398. A G3 motif region spans residues 398–401 (DLPG). The segment at 467-470 (TKVD) is G4 motif. Residues K468, D470, and T503 each contribute to the GTP site. The tract at residues 501-504 (VVTG) is G5 motif. Stalk region stretches follow at residues 589-836 (DRNE…IKDT) and 874-928 (CNDV…VKLL). A paddle region region spans residues 736–856 (SDKQQWDAAI…KTALNHCNLC (121 aa)). An intramembrane segment occupies 771–781 (WKKRWMYWKNR). Residues 782 to 960 (TQEQCVHNET…AFIEALHQEK (179 aa)) are Mitochondrial intermembrane-facing. A disulfide bond links C856 and C874. Positions 895–960 (RQQLTNTEVR…AFIEALHQEK (66 aa)) form a coiled coil.

The protein belongs to the TRAFAC class dynamin-like GTPase superfamily. Dynamin/Fzo/YdjA family. As to quaternary structure, oligomeric complex consisting of membrane-bound and soluble forms of OPA1. Interacts with RCC1L; RCC1L acts as a guanine nucleotide exchange factor (GEF) for OPA1 by exchanging bound GDP for free GTP. Interacts with CHCHD3 and IMMT; these interactions occur preferentially with soluble OPA1 forms. Interacts with PRELID1. In terms of processing, cleaved by OMA1 or YME1L downstream of the transmembrane region in response to different signals to generate soluble forms. Cleaved by OMA1 at position S1 following stress conditions, generating the short soluble form (Dynamin-like GTPase OPA1, short form; S-OPA1). AFG3L2 is involved in the regulation of OMA1-dependent processing of OPA1. PARL-dependent proteolytic processing releases an antiapoptotic soluble form not required for mitochondrial fusion. Cleavage at position S2 by YME1L is required to mediate oxidative phosphorylation (OXPHOS)-induced mitochondrial fusion. Cleavage occurs in the sequence motif Leu-Gln-Gln-Gln-Ile-Gln (LQQQIQ). Post-translationally, cleavage at position S3 by YME1L is required for membrane tubulation. As to expression, detected in brain (at protein level). Detected in brain, brain stem, heart, kidney, liver and skeletal muscle.

It is found in the mitochondrion inner membrane. It localises to the mitochondrion intermembrane space. It carries out the reaction GTP + H2O = GDP + phosphate + H(+). Activated by guanine nucleotide exchange factor RCC1L. In terms of biological role, dynamin-related GTPase that is essential for normal mitochondrial morphology by mediating fusion of the mitochondrial inner membranes, regulating cristae morphology and maintaining respiratory chain function. Exists in two forms: the transmembrane, long form (Dynamin-like GTPase OPA1, long form; L-OPA1), which is tethered to the inner mitochondrial membrane, and the short soluble form (Dynamin-like GTPase OPA1, short form; S-OPA1), which results from proteolytic cleavage and localizes in the intermembrane space. Both forms (L-OPA1 and S-OPA1) cooperate to catalyze the fusion of the mitochondrial inner membrane. The equilibrium between L-OPA1 and S-OPA1 is essential: excess levels of S-OPA1, produced by cleavage by OMA1 following loss of mitochondrial membrane potential, lead to an impaired equilibrium between L-OPA1 and S-OPA1, inhibiting mitochondrial fusion. The balance between L-OPA1 and S-OPA1 also influences cristae shape and morphology. Involved in remodeling cristae and the release of cytochrome c during apoptosis. Proteolytic processing by PARL in response to intrinsic apoptotic signals may lead to disassembly of OPA1 oligomers and release of the caspase activator cytochrome C (CYCS) into the mitochondrial intermembrane space. Acts as a regulator of T-helper Th17 cells, which are characterized by cells with fused mitochondria with tight cristae, by mediating mitochondrial membrane remodeling: OPA1 is required for interleukin-17 (IL-17) production. Its role in mitochondrial morphology is required for mitochondrial genome maintenance. Constitutes the transmembrane long form (L-OPA1) that plays a central role in mitochondrial inner membrane fusion and cristae morphology. L-OPA1 and the soluble short form (S-OPA1) form higher-order helical assemblies that coordinate the fusion of mitochondrial inner membranes. Inner membrane-anchored L-OPA1 molecules initiate membrane remodeling by recruiting soluble S-OPA1 to rapidly polymerize into a flexible cylindrical scaffold encaging the mitochondrial inner membrane. Once at the membrane surface, the formation of S-OPA1 helices induce bilayer curvature. OPA1 dimerization through the paddle region, which inserts into cardiolipin-containing membrane, promotes GTP hydrolysis and the helical assembly of a flexible OPA1 lattice on the membrane, which drives membrane curvature and mitochondrial fusion. Plays a role in the maintenance and remodeling of mitochondrial cristae, some invaginations of the mitochondrial inner membrane that provide an increase in the surface area. Probably acts by forming helical filaments at the inside of inner membrane tubes with the shape and dimensions of crista junctions. The equilibrium between L-OPA1 and S-OPA1 influences cristae shape and morphology: increased L-OPA1 levels promote cristae stacking and elongated mitochondria, while increased S-OPA1 levels correlated with irregular cristae packing and round mitochondria shape. Its function is as follows. Constitutes the soluble short form (S-OPA1) generated by cleavage by OMA1, which plays a central role in mitochondrial inner membrane fusion and cristae morphology. The transmembrane long form (L-OPA1) and the S-OPA1 form higher-order helical assemblies that coordinate the fusion of mitochondrial inner membranes. Inner membrane-anchored L-OPA1 molecules initiate membrane remodeling by recruiting soluble S-OPA1 to rapidly polymerize into a flexible cylindrical scaffold encaging the mitochondrial inner membrane. Once at the membrane surface, the formation of S-OPA1 helices induce bilayer curvature. OPA1 dimerization through the paddle region, which inserts into cardiolipin-containing membrane, promotes GTP hydrolysis and the helical assembly of a flexible OPA1 lattice on the membrane, which drives membrane curvature and mitochondrial fusion. Excess levels of S-OPA1 produced by cleavage by OMA1 following stress conditions that induce loss of mitochondrial membrane potential, lead to an impaired equilibrium between L-OPA1 and S-OPA1, thereby inhibiting mitochondrial fusion. Involved in mitochondrial safeguard in response to transient mitochondrial membrane depolarization by mediating flickering: cleavage by OMA1 leads to excess production of S-OPA1, preventing mitochondrial hyperfusion. Plays a role in the maintenance and remodeling of mitochondrial cristae, some invaginations of the mitochondrial inner membrane that provide an increase in the surface area. Probably acts by forming helical filaments at the inside of inner membrane tubes with the shape and dimensions of crista junctions. The equilibrium between L-OPA1 and S-OPA1 influences cristae shape and morphology: increased L-OPA1 levels promote cristae stacking and elongated mitochondria, while increased S-OPA1 levels correlated with irregular cristae packing and round mitochondria shape. Functionally, isoforms that contain the alternative exon 4b are required for mitochondrial genome maintenance, possibly by anchoring the mitochondrial nucleoids to the inner mitochondrial membrane. The chain is Dynamin-like GTPase OPA1, mitochondrial from Mus musculus (Mouse).